The primary structure comprises 154 residues: 6,7-dimethyl-8-ribityllumazine synthase (154 aa).

5-amino-6-(D-ribitylamino)uracil is bound by residues F22, 56 to 58 (AFE), and 80 to 82 (TVI). 85 to 86 (ST) contributes to the (2S)-2-hydroxy-3-oxobutyl phosphate binding site. The active-site Proton donor is the H88. F113 contacts 5-amino-6-(D-ribitylamino)uracil. R127 contacts (2S)-2-hydroxy-3-oxobutyl phosphate.

It belongs to the DMRL synthase family.

It carries out the reaction (2S)-2-hydroxy-3-oxobutyl phosphate + 5-amino-6-(D-ribitylamino)uracil = 6,7-dimethyl-8-(1-D-ribityl)lumazine + phosphate + 2 H2O + H(+). Its pathway is cofactor biosynthesis; riboflavin biosynthesis; riboflavin from 2-hydroxy-3-oxobutyl phosphate and 5-amino-6-(D-ribitylamino)uracil: step 1/2. Functionally, catalyzes the formation of 6,7-dimethyl-8-ribityllumazine by condensation of 5-amino-6-(D-ribitylamino)uracil with 3,4-dihydroxy-2-butanone 4-phosphate. This is the penultimate step in the biosynthesis of riboflavin. The protein is 6,7-dimethyl-8-ribityllumazine synthase of Lactococcus lactis subsp. lactis (strain IL1403) (Streptococcus lactis).